The chain runs to 252 residues: Urease accessory protein UreH (252 aa).

This sequence belongs to the UreD family. UreH, UreF and UreG form a complex that acts as a GTP-hydrolysis-dependent molecular chaperone, activating the urease apoprotein by helping to assemble the nickel containing metallocenter of UreC. The UreE protein probably delivers the nickel.

The protein resides in the cytoplasm. In terms of biological role, required for maturation of urease via the functional incorporation of the urease nickel metallocenter. In Helicobacter hepaticus (strain ATCC 51449 / 3B1), this protein is Urease accessory protein UreH.